We begin with the raw amino-acid sequence, 107 residues long: Cytochrome c2 (107 aa).

At glutamine 1 the chain carries Pyrrolidone carboxylic acid. Heme c contacts are provided by cysteine 13, cysteine 16, histidine 17, and methionine 79.

This sequence belongs to the cytochrome c family. Binds 1 heme c group covalently per subunit.

The protein localises to the periplasm. In terms of biological role, cytochrome c2 is found mainly in purple, non-sulfur, photosynthetic bacteria where it functions as the electron donor to the oxidized bacteriochlorophyll in the photophosphorylation pathway. However, it may also have a role in the respiratory chain and is found in some non-photosynthetic bacteria. The protein is Cytochrome c2 of Rhodoplanes tepidamans (Rhodoplanes cryptolactis).